Here is a 94-residue protein sequence, read N- to C-terminus: C-X-C motif chemokine 11 (94 aa).

An N-terminal signal peptide occupies residues 1–21 (MSVKGMAIALAVILCATVVQG). Arginine 27 carries the citrulline; by PAD2 modification. Cystine bridges form between cysteine 30-cysteine 57 and cysteine 32-cysteine 74.

In terms of assembly, interacts with TNFAIP6 (via Link domain). High levels in peripheral blood leukocytes, pancreas and liver astrocytes. Moderate levels in thymus, spleen and lung. Low levels in placenta, prostate and small intestine. Also found in epidermal basal layer keratinocytes in skin disorders.

The protein resides in the secreted. Chemotactic for interleukin-activated T-cells but not unstimulated T-cells, neutrophils or monocytes. Induces calcium release in activated T-cells. Binds to CXCR3. May play an important role in CNS diseases which involve T-cell recruitment. May play a role in skin immune responses. In Homo sapiens (Human), this protein is C-X-C motif chemokine 11 (CXCL11).